The following is a 469-amino-acid chain: Probable NADPH:adrenodoxin oxidoreductase, mitochondrial (469 aa).

Residues 1 to 38 (MLSRFIKRTYSTQTSSPVVGIIGSGPAAFYTAHRLLRN) constitute a mitochondrion transit peptide. The FAD site is built by Ala-27, Glu-48, Leu-56, and Val-92. NADP(+) is bound by residues 164–167 (HGNV), 208–209 (RR), and Glu-220. Residues Trp-375 and 382–384 (GVI) each bind FAD. Gly-382 is a binding site for NADP(+).

Belongs to the ferredoxin--NADP reductase type 1 family. The cofactor is FAD.

It is found in the mitochondrion inner membrane. The catalysed reaction is 2 reduced [adrenodoxin] + NADP(+) + H(+) = 2 oxidized [adrenodoxin] + NADPH. Adrenodoxin reductase transfers electrons from NADPH to adrenodoxin, which is involved in heme A biosynthesis and in iron-sulfur cluster assembly. Involved in the electron transfer to heme A synthase etp1(cd), a heme protein that catalyzes the conversion of heme O to heme A. Required for the de novo synthesis of Fe-S clusters on iron sulfur cluster assembly protein isu1. Involved in electron delivery for Fe-S cluster synthesis. Essential for coenzyme Q biosynthesis. May be involved in the electron transfer required for the hydroxylation reaction performed by coq6. May play a role in cellular and mitochondrial iron homeostasis. This chain is Probable NADPH:adrenodoxin oxidoreductase, mitochondrial (arh1), found in Schizosaccharomyces pombe (strain 972 / ATCC 24843) (Fission yeast).